Reading from the N-terminus, the 147-residue chain is D-aminoacyl-tRNA deacylase (147 aa).

The short motif at 137–138 (GP) is the Gly-cisPro motif, important for rejection of L-amino acids element.

The protein belongs to the DTD family. In terms of assembly, homodimer.

It is found in the cytoplasm. The catalysed reaction is glycyl-tRNA(Ala) + H2O = tRNA(Ala) + glycine + H(+). It catalyses the reaction a D-aminoacyl-tRNA + H2O = a tRNA + a D-alpha-amino acid + H(+). An aminoacyl-tRNA editing enzyme that deacylates mischarged D-aminoacyl-tRNAs. Also deacylates mischarged glycyl-tRNA(Ala), protecting cells against glycine mischarging by AlaRS. Acts via tRNA-based rather than protein-based catalysis; rejects L-amino acids rather than detecting D-amino acids in the active site. By recycling D-aminoacyl-tRNA to D-amino acids and free tRNA molecules, this enzyme counteracts the toxicity associated with the formation of D-aminoacyl-tRNA entities in vivo and helps enforce protein L-homochirality. In Bacillus velezensis (strain DSM 23117 / BGSC 10A6 / LMG 26770 / FZB42) (Bacillus amyloliquefaciens subsp. plantarum), this protein is D-aminoacyl-tRNA deacylase.